The primary structure comprises 552 residues: Dihydroxy-acid dehydratase (552 aa).

Position 78 (D78) interacts with Mg(2+). C119 is a binding site for [2Fe-2S] cluster. Positions 120 and 121 each coordinate Mg(2+). K121 carries the post-translational modification N6-carboxylysine. A [2Fe-2S] cluster-binding site is contributed by C190. Position 441 (E441) interacts with Mg(2+). Residue S467 is the Proton acceptor of the active site.

It belongs to the IlvD/Edd family. Homodimer. [2Fe-2S] cluster is required as a cofactor. The cofactor is Mg(2+).

It carries out the reaction (2R)-2,3-dihydroxy-3-methylbutanoate = 3-methyl-2-oxobutanoate + H2O. The catalysed reaction is (2R,3R)-2,3-dihydroxy-3-methylpentanoate = (S)-3-methyl-2-oxopentanoate + H2O. The protein operates within amino-acid biosynthesis; L-isoleucine biosynthesis; L-isoleucine from 2-oxobutanoate: step 3/4. It functions in the pathway amino-acid biosynthesis; L-valine biosynthesis; L-valine from pyruvate: step 3/4. Its function is as follows. Functions in the biosynthesis of branched-chain amino acids. Catalyzes the dehydration of (2R,3R)-2,3-dihydroxy-3-methylpentanoate (2,3-dihydroxy-3-methylvalerate) into 2-oxo-3-methylpentanoate (2-oxo-3-methylvalerate) and of (2R)-2,3-dihydroxy-3-methylbutanoate (2,3-dihydroxyisovalerate) into 2-oxo-3-methylbutanoate (2-oxoisovalerate), the penultimate precursor to L-isoleucine and L-valine, respectively. This Ignicoccus hospitalis (strain KIN4/I / DSM 18386 / JCM 14125) protein is Dihydroxy-acid dehydratase.